The primary structure comprises 537 residues: Glucans biosynthesis protein D 2 (537 aa).

Positions 1–28 (MVTRRHLLASASLSATLAALGITPEALA) form a signal peptide, tat-type signal.

It belongs to the OpgD/OpgG family. Predicted to be exported by the Tat system. The position of the signal peptide cleavage has not been experimentally proven.

It is found in the periplasm. It participates in glycan metabolism; osmoregulated periplasmic glucan (OPG) biosynthesis. Probably involved in the control of the structural glucose backbone of osmoregulated periplasmic glucans (OPGs). The protein is Glucans biosynthesis protein D 2 (opgD2) of Ralstonia nicotianae (strain ATCC BAA-1114 / GMI1000) (Ralstonia solanacearum).